Reading from the N-terminus, the 306-residue chain is D-alanine--D-alanine ligase (306 aa).

One can recognise an ATP-grasp domain in the interval 102–300 (KHVAKAAGIP…FGEFLRWMVE (199 aa)). ATP is bound at residue 128–183 (PMKPPYVVKPVREGSSFGVVIVKEDQSHPPQVITSSEWRYGDRVMVERYIAGRELT). Positions 252, 267, and 269 each coordinate Mg(2+).

This sequence belongs to the D-alanine--D-alanine ligase family. It depends on Mg(2+) as a cofactor. Mn(2+) serves as cofactor.

It is found in the cytoplasm. The enzyme catalyses 2 D-alanine + ATP = D-alanyl-D-alanine + ADP + phosphate + H(+). Its pathway is cell wall biogenesis; peptidoglycan biosynthesis. In terms of biological role, cell wall formation. The polypeptide is D-alanine--D-alanine ligase (Sinorhizobium fredii (strain NBRC 101917 / NGR234)).